We begin with the raw amino-acid sequence, 298 residues long: Inosose dehydratase (298 aa).

The protein belongs to the IolE/MocC family. It depends on glutathione as a cofactor. Co(2+) serves as cofactor. Requires Mn(2+) as cofactor.

The catalysed reaction is scyllo-inosose = 3D-3,5/4-trihydroxycyclohexane-1,2-dione + H2O. It participates in polyol metabolism; myo-inositol degradation into acetyl-CoA; acetyl-CoA from myo-inositol: step 2/7. In terms of biological role, catalyzes the dehydration of inosose (2-keto-myo-inositol, 2KMI or 2,4,6/3,5-pentahydroxycyclohexanone) to 3D-(3,5/4)-trihydroxycyclohexane-1,2-dione (D-2,3-diketo-4-deoxy-epi-inositol). The chain is Inosose dehydratase from Clostridium botulinum (strain Alaska E43 / Type E3).